Here is an 81-residue protein sequence, read N- to C-terminus: Short neurotoxin 2 (81 aa).

The N-terminal stretch at 1-21 (MKTLLLTLVVVTIVCLDLGYT) is a signal peptide. 4 cysteine pairs are disulfide-bonded: C24–C43, C38–C60, C62–C73, and C74–C79.

This sequence belongs to the three-finger toxin family. Short-chain subfamily. Type I alpha-neurotoxin sub-subfamily. As to expression, expressed by the venom gland.

It localises to the secreted. Functionally, binds to muscle nicotinic acetylcholine receptor (nAChR) and inhibit acetylcholine from binding to the receptor, thereby impairing neuromuscular transmission. The protein is Short neurotoxin 2 of Drysdalia coronoides (White-lipped snake).